Consider the following 99-residue polypeptide: Large ribosomal subunit protein uL23 (99 aa).

This sequence belongs to the universal ribosomal protein uL23 family. In terms of assembly, part of the 50S ribosomal subunit. Contacts protein L29, and trigger factor when it is bound to the ribosome.

Its function is as follows. One of the early assembly proteins it binds 23S rRNA. One of the proteins that surrounds the polypeptide exit tunnel on the outside of the ribosome. Forms the main docking site for trigger factor binding to the ribosome. In Streptococcus suis (strain 98HAH33), this protein is Large ribosomal subunit protein uL23.